Consider the following 390-residue polypeptide: Digeranylgeranylglycerophospholipid reductase (390 aa).

Alanine 18, glutamate 37, cysteine 48, alanine 49, alanine 51, arginine 98, valine 122, aspartate 278, glycine 290, and isoleucine 291 together coordinate FAD. Valine 368 contacts a 2,3-bis-O-(geranylgeranyl)-sn-glycerol 1-phospholipid.

Belongs to the geranylgeranyl reductase family. DGGGPL reductase subfamily. Requires FAD as cofactor.

The enzyme catalyses a 2,3-bis-O-phytanyl-sn-glycerol 1-phospholipid + 8 A = a 2,3-bis-O-(geranylgeranyl)-sn-glycerol 1-phospholipid + 8 AH2. It carries out the reaction 2,3-bis-O-(phytanyl)-sn-glycerol 1-phosphate + 8 A = 2,3-bis-O-(geranylgeranyl)-sn-glycerol 1-phosphate + 8 AH2. The catalysed reaction is CDP-2,3-bis-O-(geranylgeranyl)-sn-glycerol + 8 AH2 = CDP-2,3-bis-O-(phytanyl)-sn-glycerol + 8 A. It catalyses the reaction archaetidylserine + 8 AH2 = 2,3-bis-O-phytanyl-sn-glycero-3-phospho-L-serine + 8 A. It participates in membrane lipid metabolism; glycerophospholipid metabolism. Is involved in the reduction of 2,3-digeranylgeranylglycerophospholipids (unsaturated archaeols) into 2,3-diphytanylglycerophospholipids (saturated archaeols) in the biosynthesis of archaeal membrane lipids. Catalyzes the formation of archaetidic acid (2,3-di-O-phytanyl-sn-glyceryl phosphate) from 2,3-di-O-geranylgeranylglyceryl phosphate (DGGGP) via the hydrogenation of each double bond of the isoprenoid chains. Is also probably able to reduce double bonds of geranyl groups in CDP-2,3-bis-O-(geranylgeranyl)-sn-glycerol and archaetidylserine, thus acting at various stages in the biosynthesis of archaeal membrane lipids. In Methanococcus vannielii (strain ATCC 35089 / DSM 1224 / JCM 13029 / OCM 148 / SB), this protein is Digeranylgeranylglycerophospholipid reductase.